Here is a 425-residue protein sequence, read N- to C-terminus: uncharacterized protein (425 aa).

This sequence to K.pneumoniae SorE.

This is an uncharacterized protein from Escherichia coli (strain K12).